Consider the following 66-residue polypeptide: Large ribosomal subunit protein uL30 (66 aa).

This sequence belongs to the universal ribosomal protein uL30 family. In terms of assembly, part of the 50S ribosomal subunit.

This Chloroherpeton thalassium (strain ATCC 35110 / GB-78) protein is Large ribosomal subunit protein uL30.